Here is a 265-residue protein sequence, read N- to C-terminus: Serine protease harobin (265 aa).

The first 18 residues, 1–18 (MPLIRVLASLLILQLSYG), serve as a signal peptide directing secretion. Residues 19 to 33 (KSLDNGAKAITSLDR) constitute a propeptide that is removed on maturation. The Peptidase S1 domain maps to 34 to 257 (IIGGFECNPS…YKDWIEGIIA (224 aa)). 7 disulfide bridges follow: Cys40–Cys172, Cys59–Cys75, Cys106–Cys152, Cys107–Cys264, Cys151–Cys218, Cys183–Cys197, and Cys208–Cys233. Residue His74 is the Charge relay system of the active site. The N-linked (GlcNAc...) asparagine glycan is linked to Asn112. Catalysis depends on Asp119, which acts as the Charge relay system. Asn130 carries N-linked (GlcNAc...) asparagine glycosylation. Residue Ser212 is the Charge relay system of the active site.

It belongs to the peptidase S1 family. Snake venom subfamily. As to quaternary structure, monomer. Harobin contains three additional Cys residues than other snake venom serine proteases, suggesting an additional disulfide bond. In addition, it is more stable than other snake 6-disulfide-bond serine proteases, since it is less sensitive to DTT. In terms of tissue distribution, expressed by the venom gland.

The protein localises to the secreted. With respect to regulation, inhibited by PMSF. Its function is as follows. Serine protein with fibrinolytic and fibrinogenolytic activities. Degrades Bbeta-chain (FGB) of fibrinogen first and then the Aalpha-chain (FGA). Gamma-chain (FGG) are also digested on prolonged incubation. In vitro, it cleaves high molecular weight (HMW) kininogen (KNG) releasing bradykinin that promotes vasodilation. In vitro and in vivo, it cleaves angiotensin-2 (AGT). This explains the reduction of blood pressure in hypertensive rats. Also has antithrombotic effects on thrombosis animal models. The polypeptide is Serine protease harobin (Hydrophis hardwickii (Hardwick's spine-bellied seasnake)).